The primary structure comprises 276 residues: Small ribosomal subunit protein uS3 (276 aa).

The 69-residue stretch at 43 to 111 (IRQLMSTGME…QVQLNILEVK (69 aa)) folds into the KH type-2 domain. Low complexity predominate over residues 218-227 (AQAASAPSRG). The interval 218 to 276 (AQAASAPSRGPRSDRGGRPGGADRGDRRRRNDRPAADAAPAAEAPAVEAAPAAAEGGQA) is disordered. Residues 228–243 (PRSDRGGRPGGADRGD) show a composition bias toward basic and acidic residues. The segment covering 253 to 276 (ADAAPAAEAPAVEAAPAAAEGGQA) has biased composition (low complexity).

Belongs to the universal ribosomal protein uS3 family. In terms of assembly, part of the 30S ribosomal subunit. Forms a tight complex with proteins S10 and S14.

In terms of biological role, binds the lower part of the 30S subunit head. Binds mRNA in the 70S ribosome, positioning it for translation. The protein is Small ribosomal subunit protein uS3 of Pseudarthrobacter chlorophenolicus (strain ATCC 700700 / DSM 12829 / CIP 107037 / JCM 12360 / KCTC 9906 / NCIMB 13794 / A6) (Arthrobacter chlorophenolicus).